Here is a 147-residue protein sequence, read N- to C-terminus: Large ribosomal subunit protein uL13 (147 aa).

It belongs to the universal ribosomal protein uL13 family. As to quaternary structure, part of the 50S ribosomal subunit.

In terms of biological role, this protein is one of the early assembly proteins of the 50S ribosomal subunit, although it is not seen to bind rRNA by itself. It is important during the early stages of 50S assembly. In Ligilactobacillus salivarius (strain UCC118) (Lactobacillus salivarius), this protein is Large ribosomal subunit protein uL13.